The primary structure comprises 412 residues: DnaJ homolog subfamily A member 2 (412 aa).

The J domain maps to 8 to 70 (KLYDILGVPP…EKRELYDRYG (63 aa)). Lys39 carries the post-translational modification N6-acetyllysine. Residues Ser78 and Ser123 each carry the phosphoserine modification. The segment at 130–214 (GKTTKLQLSK…CEGKKVIKEV (85 aa)) adopts a CR-type zinc-finger fold. Lys134 is covalently cross-linked (Glycyl lysine isopeptide (Lys-Gly) (interchain with G-Cter in SUMO2)). Zn(2+) contacts are provided by Cys143 and Cys146. A CXXCXGXG motif repeat occupies 143-150 (CSACSGQG). An N6-acetyllysine modification is found at Lys152. Positions 159, 162, 186, 189, 202, and 205 each coordinate Zn(2+). 3 CXXCXGXG motif repeats span residues 159-166 (CSACRGRG), 186-193 (CSDCNGEG), and 202-209 (CKKCEGKK). The tract at residues 365–412 (IGETEEVELQEFDSTRGSGGGQRREAYNDSSDEESSSHHGPGVQCAHQ) is disordered. Tyr391 carries the phosphotyrosine modification. Phosphoserine is present on residues Ser394 and Ser395. The residue at position 409 (Cys409) is a Cysteine methyl ester. Residue Cys409 is the site of S-farnesyl cysteine attachment. Residues 410-412 (AHQ) constitute a propeptide, removed in mature form.

It localises to the membrane. In terms of biological role, co-chaperone of Hsc70. Stimulates ATP hydrolysis and the folding of unfolded proteins mediated by HSPA1A/B (in vitro). This chain is DnaJ homolog subfamily A member 2 (Dnaja2), found in Rattus norvegicus (Rat).